An 87-amino-acid chain; its full sequence is Probable Fe(2+)-trafficking protein (87 aa).

It belongs to the Fe(2+)-trafficking protein family.

In terms of biological role, could be a mediator in iron transactions between iron acquisition and iron-requiring processes, such as synthesis and/or repair of Fe-S clusters in biosynthetic enzymes. This chain is Probable Fe(2+)-trafficking protein, found in Francisella tularensis subsp. novicida (strain U112).